Consider the following 669-residue polypeptide: UvrABC system protein B (669 aa).

The Helicase ATP-binding domain occupies 26–183 (TNFHAGIAKQ…RHLTELQYTR (158 aa)). 39 to 46 (GVTGSGKT) provides a ligand contact to ATP. Positions 92–115 (YYDYYQPEAYVPASDTFIEKDSSI) match the Beta-hairpin motif. The Helicase C-terminal domain maps to 431–597 (QVDDLISQIN…SVVRPISDIL (167 aa)). One can recognise a UVR domain in the interval 631–666 (AAQMKMLEQQMYQHARDLEFEDAARIRDQIQRLREA).

Belongs to the UvrB family. As to quaternary structure, forms a heterotetramer with UvrA during the search for lesions. Interacts with UvrC in an incision complex.

The protein resides in the cytoplasm. Its function is as follows. The UvrABC repair system catalyzes the recognition and processing of DNA lesions. A damage recognition complex composed of 2 UvrA and 2 UvrB subunits scans DNA for abnormalities. Upon binding of the UvrA(2)B(2) complex to a putative damaged site, the DNA wraps around one UvrB monomer. DNA wrap is dependent on ATP binding by UvrB and probably causes local melting of the DNA helix, facilitating insertion of UvrB beta-hairpin between the DNA strands. Then UvrB probes one DNA strand for the presence of a lesion. If a lesion is found the UvrA subunits dissociate and the UvrB-DNA preincision complex is formed. This complex is subsequently bound by UvrC and the second UvrB is released. If no lesion is found, the DNA wraps around the other UvrB subunit that will check the other stand for damage. The chain is UvrABC system protein B from Xylella fastidiosa (strain M12).